Reading from the N-terminus, the 496-residue chain is UDP-N-acetylmuramoylalanine--D-glutamate ligase (496 aa).

130-136 is a binding site for ATP; sequence GTNGKTT.

Belongs to the MurCDEF family. In terms of assembly, interacts with PknA. Phosphorylated by PknA.

It is found in the cytoplasm. It carries out the reaction UDP-N-acetyl-alpha-D-muramoyl-L-alanine + D-glutamate + ATP = UDP-N-acetyl-alpha-D-muramoyl-L-alanyl-D-glutamate + ADP + phosphate + H(+). Its pathway is cell wall biogenesis; peptidoglycan biosynthesis. Functionally, cell wall formation. Catalyzes the addition of glutamate to the nucleotide precursor UDP-N-acetylmuramoyl-L-alanine (UMA). This chain is UDP-N-acetylmuramoylalanine--D-glutamate ligase, found in Mycobacterium tuberculosis (strain ATCC 25177 / H37Ra).